Consider the following 546-residue polypeptide: Arginine--tRNA ligase (546 aa).

Positions 122 to 132 (ANPTGPFTVGH) match the 'HIGH' region motif.

This sequence belongs to the class-I aminoacyl-tRNA synthetase family. As to quaternary structure, monomer.

Its subcellular location is the cytoplasm. It carries out the reaction tRNA(Arg) + L-arginine + ATP = L-arginyl-tRNA(Arg) + AMP + diphosphate. The sequence is that of Arginine--tRNA ligase from Thermotoga petrophila (strain ATCC BAA-488 / DSM 13995 / JCM 10881 / RKU-1).